We begin with the raw amino-acid sequence, 373 residues long: Chaperone protein DnaJ (373 aa).

The region spanning Asn4–Gly68 is the J domain. The CR-type zinc-finger motif lies at Gly136–Gln214. Zn(2+)-binding residues include Cys149, Cys152, Cys166, Cys169, Cys188, Cys191, Cys202, and Cys205. CXXCXGXG motif repeat units lie at residues Cys149–Gly156, Cys166–Gly173, Cys188–Gly195, and Cys202–Gly209.

Belongs to the DnaJ family. Homodimer. Zn(2+) is required as a cofactor.

The protein localises to the cytoplasm. Participates actively in the response to hyperosmotic and heat shock by preventing the aggregation of stress-denatured proteins and by disaggregating proteins, also in an autonomous, DnaK-independent fashion. Unfolded proteins bind initially to DnaJ; upon interaction with the DnaJ-bound protein, DnaK hydrolyzes its bound ATP, resulting in the formation of a stable complex. GrpE releases ADP from DnaK; ATP binding to DnaK triggers the release of the substrate protein, thus completing the reaction cycle. Several rounds of ATP-dependent interactions between DnaJ, DnaK and GrpE are required for fully efficient folding. Also involved, together with DnaK and GrpE, in the DNA replication of plasmids through activation of initiation proteins. The chain is Chaperone protein DnaJ from Rickettsia rickettsii (strain Sheila Smith).